The sequence spans 100 residues: ATP-dependent Clp protease adapter protein ClpS (100 aa).

This sequence belongs to the ClpS family. Binds to the N-terminal domain of the chaperone ClpA.

Its function is as follows. Involved in the modulation of the specificity of the ClpAP-mediated ATP-dependent protein degradation. This is ATP-dependent Clp protease adapter protein ClpS from Neisseria meningitidis serogroup B (strain ATCC BAA-335 / MC58).